The chain runs to 299 residues: NADH-cytochrome b5 reductase 2 (299 aa).

The chain crosses the membrane as a helical span at residues 13 to 35; sequence SFKVLAPFAAAVGSVGIAYQYST. The region spanning 50 to 154 is the FAD-binding FR-type domain; that stretch reads DEWIDLKLAK…KGPVVKWKWE (105 aa). 157 to 192 serves as a coordination point for FAD; sequence QYKSIALIGGGTGITPLYQLMHEITKNPEDKTKVNL.

It belongs to the flavoprotein pyridine nucleotide cytochrome reductase family. Requires FAD as cofactor.

Its subcellular location is the mitochondrion outer membrane. The catalysed reaction is 2 Fe(III)-[cytochrome b5] + NADH = 2 Fe(II)-[cytochrome b5] + NAD(+) + H(+). May mediate the reduction of outer membrane cytochrome b5. The sequence is that of NADH-cytochrome b5 reductase 2 (MCR1) from Debaryomyces hansenii (strain ATCC 36239 / CBS 767 / BCRC 21394 / JCM 1990 / NBRC 0083 / IGC 2968) (Yeast).